Here is a 387-residue protein sequence, read N- to C-terminus: Mannitol-1-phosphate 5-dehydrogenase (387 aa).

3–14 (AVHFGAGNIGRG) provides a ligand contact to NAD(+).

It belongs to the mannitol dehydrogenase family.

It carries out the reaction D-mannitol 1-phosphate + NAD(+) = beta-D-fructose 6-phosphate + NADH + H(+). The chain is Mannitol-1-phosphate 5-dehydrogenase from Pseudarthrobacter chlorophenolicus (strain ATCC 700700 / DSM 12829 / CIP 107037 / JCM 12360 / KCTC 9906 / NCIMB 13794 / A6) (Arthrobacter chlorophenolicus).